A 139-amino-acid polypeptide reads, in one-letter code: UDP-glucose 4-epimerase (139 aa).

NAD(+)-binding positions include 11–12 (YI), 31–36 (DNLCNS), 58–59 (DI), 80–84 (FAGLK), N99, and S124. S124 contributes to the substrate binding site. Y136 serves as the catalytic Proton acceptor.

It belongs to the NAD(P)-dependent epimerase/dehydratase family. Homodimer. Requires NAD(+) as cofactor.

It carries out the reaction UDP-alpha-D-glucose = UDP-alpha-D-galactose. Its pathway is carbohydrate metabolism; galactose metabolism. In terms of biological role, involved in the metabolism of galactose. Catalyzes the conversion of UDP-galactose (UDP-Gal) to UDP-glucose (UDP-Glc) through a mechanism involving the transient reduction of NAD. This chain is UDP-glucose 4-epimerase (galE), found in Klebsiella pneumoniae.